The sequence spans 70 residues: U2-agatoxin-Ao1j (70 aa).

The N-terminal stretch at 1–20 (MRAIISLLLISAMVFSMIAA) is a signal peptide. A propeptide spanning residues 21-34 (VPEEEGLQLSEDER) is cleaved from the precursor. Disulfide bonds link Cys-37–Cys-53, Cys-44–Cys-58, and Cys-52–Cys-68. Leu-69 carries the leucine amide modification.

It belongs to the neurotoxin 01 (U2-agtx) family. Expressed by the venom gland.

Its subcellular location is the secreted. Insect active toxin causing rapid but reversible paralysis in crickets. No activity shown in mammals. Does not show effect on mammalian voltage-gated calcium channels. The polypeptide is U2-agatoxin-Ao1j (Agelena orientalis (Funnel-web spider)).